Here is a 549-residue protein sequence, read N- to C-terminus: Rhodopsin kinase grk7a (549 aa).

Serine 33 is modified (phosphoserine). The region spanning 53 to 171 (FESLCEKQPI…QASPFFDKFL (119 aa)) is the RGS domain. The Protein kinase domain maps to 186-449 (FYEFRTLGKG…NDDPRKHEWF (264 aa)). ATP is bound by residues 192-200 (LGKGGFGEV) and lysine 215. The Proton acceptor role is filled by aspartate 311. The AGC-kinase C-terminal domain maps to 450–515 (KSINFARLEA…GAVSIAWQQE (66 aa)). The interval 522–549 (FDELSDPNRKESSGGSDDDKKSGTCTLL) is disordered. A compositionally biased stretch (basic and acidic residues) spans 527–543 (DPNRKESSGGSDDDKKS). Cysteine 546 is subject to Cysteine methyl ester. Residue cysteine 546 is the site of S-geranylgeranyl cysteine attachment. Positions 547-549 (TLL) are cleaved as a propeptide — removed in mature form.

This sequence belongs to the protein kinase superfamily. AGC Ser/Thr protein kinase family. GPRK subfamily. Post-translationally, phosphorylation at Ser-33 is regulated by light and activated by cAMP.

The protein resides in the membrane. The enzyme catalyses L-threonyl-[rhodopsin] + ATP = O-phospho-L-threonyl-[rhodopsin] + ADP + H(+). The catalysed reaction is L-seryl-[rhodopsin] + ATP = O-phospho-L-seryl-[rhodopsin] + ADP + H(+). Its function is as follows. Retina-specific kinase involved in the shutoff of the photoresponse and adaptation to changing light conditions via cone opsin phosphorylation, including rhodopsin (RHO). The sequence is that of Rhodopsin kinase grk7a (grk7a) from Danio rerio (Zebrafish).